A 344-amino-acid chain; its full sequence is tRNA N6-adenosine threonylcarbamoyltransferase (344 aa).

2 residues coordinate Fe cation: His110 and His114. Substrate is bound by residues 133–137 (VVSGA), Asp166, Gly179, and Asn278. Residue Asp303 participates in Fe cation binding.

The protein belongs to the KAE1 / TsaD family. Requires Fe(2+) as cofactor.

It localises to the cytoplasm. The enzyme catalyses L-threonylcarbamoyladenylate + adenosine(37) in tRNA = N(6)-L-threonylcarbamoyladenosine(37) in tRNA + AMP + H(+). Required for the formation of a threonylcarbamoyl group on adenosine at position 37 (t(6)A37) in tRNAs that read codons beginning with adenine. Is involved in the transfer of the threonylcarbamoyl moiety of threonylcarbamoyl-AMP (TC-AMP) to the N6 group of A37, together with TsaE and TsaB. TsaD likely plays a direct catalytic role in this reaction. This chain is tRNA N6-adenosine threonylcarbamoyltransferase, found in Chlamydia pneumoniae (Chlamydophila pneumoniae).